A 187-amino-acid chain; its full sequence is MSINPLASKIAAPYARALFDFSVDQNLMHQITADFQNLEVFLNKTPDLTEYLSNPLISAKSKEEVLNKTLKSQINKETFKFLIVLVNRSRINLLEPIIASYLNLVYNAASVKMIEVSTAYAFTNLQKNTLIKKLKELTNAREIRLVITVDSSLIGGFLIKTNSKVLDFTIKNQLQKLAKHLDSVLEI.

This sequence belongs to the ATPase delta chain family. As to quaternary structure, F-type ATPases have 2 components, F(1) - the catalytic core - and F(0) - the membrane proton channel. F(1) has five subunits: alpha(3), beta(3), gamma(1), delta(1), epsilon(1). CF(0) has four main subunits: a(1), b(1), b'(1) and c(10-14). The alpha and beta chains form an alternating ring which encloses part of the gamma chain. F(1) is attached to F(0) by a central stalk formed by the gamma and epsilon chains, while a peripheral stalk is formed by the delta, b and b' chains.

Its subcellular location is the plastid. The protein resides in the chloroplast thylakoid membrane. In terms of biological role, f(1)F(0) ATP synthase produces ATP from ADP in the presence of a proton or sodium gradient. F-type ATPases consist of two structural domains, F(1) containing the extramembraneous catalytic core and F(0) containing the membrane proton channel, linked together by a central stalk and a peripheral stalk. During catalysis, ATP synthesis in the catalytic domain of F(1) is coupled via a rotary mechanism of the central stalk subunits to proton translocation. Its function is as follows. This protein is part of the stalk that links CF(0) to CF(1). It either transmits conformational changes from CF(0) to CF(1) or is implicated in proton conduction. This chain is ATP synthase subunit delta, chloroplastic, found in Trieres chinensis (Marine centric diatom).